Reading from the N-terminus, the 223-residue chain is Small ribosomal subunit protein uS5 (223 aa).

Low complexity predominate over residues 1–15; sequence MTEAVAAEATETAPA. The tract at residues 1-51 is disordered; the sequence is MTEAVAAEATETAPATDDRRGGRRGERGDRGQGRGDRGGRGGRDGGREAEK. Over residues 16–51 the composition is skewed to basic and acidic residues; it reads TDDRRGGRRGERGDRGQGRGDRGGRGGRDGGREAEK. The 64-residue stretch at 54–117 folds into the S5 DRBM domain; the sequence is FVERVVTINR…EEAKKSFFRV (64 aa).

This sequence belongs to the universal ribosomal protein uS5 family. As to quaternary structure, part of the 30S ribosomal subunit. Contacts proteins S4 and S8.

With S4 and S12 plays an important role in translational accuracy. In terms of biological role, located at the back of the 30S subunit body where it stabilizes the conformation of the head with respect to the body. This Paenarthrobacter aurescens (strain TC1) protein is Small ribosomal subunit protein uS5.